The following is a 297-amino-acid chain: Phosphatidylserine decarboxylase proenzyme (297 aa).

Residues Asp92, His149, and Ser254 each act as charge relay system; for autoendoproteolytic cleavage activity in the active site. Ser254 acts as the Schiff-base intermediate with substrate; via pyruvic acid; for decarboxylase activity in catalysis. A Pyruvic acid (Ser); by autocatalysis modification is found at Ser254.

It belongs to the phosphatidylserine decarboxylase family. PSD-B subfamily. Prokaryotic type I sub-subfamily. In terms of assembly, heterodimer of a large membrane-associated beta subunit and a small pyruvoyl-containing alpha subunit. Pyruvate is required as a cofactor. In terms of processing, is synthesized initially as an inactive proenzyme. Formation of the active enzyme involves a self-maturation process in which the active site pyruvoyl group is generated from an internal serine residue via an autocatalytic post-translational modification. Two non-identical subunits are generated from the proenzyme in this reaction, and the pyruvate is formed at the N-terminus of the alpha chain, which is derived from the carboxyl end of the proenzyme. The autoendoproteolytic cleavage occurs by a canonical serine protease mechanism, in which the side chain hydroxyl group of the serine supplies its oxygen atom to form the C-terminus of the beta chain, while the remainder of the serine residue undergoes an oxidative deamination to produce ammonia and the pyruvoyl prosthetic group on the alpha chain. During this reaction, the Ser that is part of the protease active site of the proenzyme becomes the pyruvoyl prosthetic group, which constitutes an essential element of the active site of the mature decarboxylase.

It localises to the cell membrane. The enzyme catalyses a 1,2-diacyl-sn-glycero-3-phospho-L-serine + H(+) = a 1,2-diacyl-sn-glycero-3-phosphoethanolamine + CO2. Its pathway is phospholipid metabolism; phosphatidylethanolamine biosynthesis; phosphatidylethanolamine from CDP-diacylglycerol: step 2/2. Functionally, catalyzes the formation of phosphatidylethanolamine (PtdEtn) from phosphatidylserine (PtdSer). This is Phosphatidylserine decarboxylase proenzyme from Bordetella bronchiseptica (strain ATCC BAA-588 / NCTC 13252 / RB50) (Alcaligenes bronchisepticus).